We begin with the raw amino-acid sequence, 394 residues long: Na(+)/H(+) antiporter NhaA (394 aa).

Transmembrane regions (helical) follow at residues 24-44 (AGLV…SPLA), 58-78 (LSVQ…LVGL), 96-116 (TLPG…YVML), 126-146 (GWAI…SLLG), 155-175 (IFLA…IAIF), 180-200 (INVA…SLCA), 214-234 (AVLW…GVLL), 267-287 (VAFA…FASI), 300-320 (VAAG…ALMV), 336-356 (VLGV…IGLL), and 370-390 (GILA…RIAG).

The protein belongs to the NhaA Na(+)/H(+) (TC 2.A.33) antiporter family.

Its subcellular location is the cell inner membrane. The catalysed reaction is Na(+)(in) + 2 H(+)(out) = Na(+)(out) + 2 H(+)(in). Its function is as follows. Na(+)/H(+) antiporter that extrudes sodium in exchange for external protons. The sequence is that of Na(+)/H(+) antiporter NhaA from Azorhizobium caulinodans (strain ATCC 43989 / DSM 5975 / JCM 20966 / LMG 6465 / NBRC 14845 / NCIMB 13405 / ORS 571).